Here is a 280-residue protein sequence, read N- to C-terminus: uncharacterized protein (280 aa).

It belongs to the eukaryotic-type primase small subunit family.

This is an uncharacterized protein from Archaeoglobus fulgidus (strain ATCC 49558 / DSM 4304 / JCM 9628 / NBRC 100126 / VC-16).